The chain runs to 249 residues: INO80 complex subunit 1 (249 aa).

2 consecutive C2H2-type zinc fingers follow at residues 73–100 and 106–131; these read YTCE…LRSH and FICS…RTVH.

As to quaternary structure, component of the INO80 chromatin remodeling complex.

It is found in the nucleus. The protein localises to the cytoplasm. Its function is as follows. Component of the INO80 complex which remodels chromatin by shifting nucleosomes and is involved in DNA repair. The chain is INO80 complex subunit 1 (iec1) from Schizosaccharomyces pombe (strain 972 / ATCC 24843) (Fission yeast).